The sequence spans 745 residues: VCP-like ATPase (745 aa).

ATP is bound by residues 231–238 and 508–515; these read GPPGTGKT and GPPGVGKT.

This sequence belongs to the AAA ATPase family. CDC48 subfamily. As to quaternary structure, homohexamer. Forms a ring-shaped particle.

This is VCP-like ATPase (vat) from Thermoplasma acidophilum (strain ATCC 25905 / DSM 1728 / JCM 9062 / NBRC 15155 / AMRC-C165).